A 2148-amino-acid polypeptide reads, in one-letter code: Polyketide synthase 1 (2148 aa).

Residues 19–261 (FIFGDQSSCN…TPLAVHAPYH (243 aa)) form an N-terminal acylcarrier protein transacylase domain (SAT) region. The Ketosynthase family 3 (KS3) domain occupies 394-829 (ESKIAIIGMS…GGNTALLVED (436 aa)). Catalysis depends on for beta-ketoacyl synthase activity residues C566, H701, and H745. The tract at residues 929–1233 (AFVFSGQGSQ…PSLMRNKDGW (305 aa)) is malonyl-CoA:ACP transacylase (MAT) domain. The active-site For acyl/malonyl transferase activity is the S1018. The tract at residues 1310–1624 (TASVHRIVHE…RKVLNTAMPP (315 aa)) is product template (PT) domain. An N-terminal hotdog fold region spans residues 1314–1447 (HRIVHESVEK…SSLHFEQPKV (134 aa)). The PKS/mFAS DH domain occupies 1314–1619 (HRIVHESVEK…FQGIPRKVLN (306 aa)). The Proton acceptor; for dehydratase activity role is filled by H1346. A C-terminal hotdog fold region spans residues 1474-1619 (LNSRMSSGVI…FQGIPRKVLN (146 aa)). The active-site Proton donor; for dehydratase activity is the D1533. Positions 1619 to 1655 (NTAMPPPKSQNEAPVRSGPAKPAVKPPRSASSEHSGH) are disordered. Residues 1678 to 1752 (RNPMLPVFKI…DLAAHLGMDT (75 aa)) form the Carrier 1 domain. An O-(pantetheine 4'-phosphoryl)serine modification is found at S1712. Residues 1755-1790 (ADQSSGQSSSSGGLSPRSDSIGEMTSSATTPPSMSP) show a composition bias toward low complexity. A disordered region spans residues 1755-1796 (ADQSSGQSSSSGGLSPRSDSIGEMTSSATTPPSMSPRGSVSG). The Carrier 2 domain maps to 1793 to 1870 (SVSGSQCKDV…SFKHMFQQGH (78 aa)). S1830 bears the O-(pantetheine 4'-phosphoryl)serine mark. The segment at 1882–2146 (LKQYRATSTL…ERVAAFIRSI (265 aa)) is thioesterase (TE) domain. S1973 functions as the For thioesterase activity in the catalytic mechanism.

In terms of biological role, polyketide synthase; part of the Pks1 gene cluster that mediates the biosynthesis of an anthraquinone derivative pigment that contributes to conidial pigmentation that provides protection from UV radiation, heat and cold stress. The polyketide synthase Pks1 produces 1-acetyl-2,4,6,8-tetrahydroxy-9,10-anthraquinone though condensation of acetyl-CoA with malonyl-CoA. The dehydratase EthD and the laccase Mlac1 further convert the anthraquinone derivative into the final conidial pigment. The protein is Polyketide synthase 1 of Metarhizium brunneum (strain ARSEF 3297).